Here is an 860-residue protein sequence, read N- to C-terminus: Ubiquitin carboxyl-terminal hydrolase 13 (860 aa).

The segment at 168–276 (QVSRHARSLR…EHLLHFGIDM (109 aa)) adopts a UBP-type; degenerate zinc-finger fold. Residues C192, C195, C212, and H225 each contribute to the Zn(2+) site. One can recognise a USP domain in the interval 318–857 (TGIKNLGNSC…LGYMYFYRRL (540 aa)). C327 acts as the Nucleophile in catalysis. The segment at 611-636 (DLTPPIVIPEDTRDSSTNNSLESPEI) is disordered. UBA domains are found at residues 635–676 (EIDE…IIAH) and 710–750 (QPPE…IFTH). Residues 755–768 (DESEAMSDTADTEP) are compositionally biased toward acidic residues. The interval 755-795 (DESEAMSDTADTEPNDNSFSNANAHTDSSLSPDQDLSSPRV) is disordered. Residues 769-780 (NDNSFSNANAHT) are compositionally biased toward polar residues. Over residues 781–793 (DSSLSPDQDLSSP) the composition is skewed to low complexity. Residue H819 is the Proton acceptor of the active site.

This sequence belongs to the peptidase C19 family.

The enzyme catalyses Thiol-dependent hydrolysis of ester, thioester, amide, peptide and isopeptide bonds formed by the C-terminal Gly of ubiquitin (a 76-residue protein attached to proteins as an intracellular targeting signal).. With respect to regulation, specifically inhibited by spautin-1 (specific and potent autophagy inhibitor-1), a derivative of MBCQ that binds to usp13 and inhibits deubiquitinase activity. Deubiquitinase that mediates deubiquitination of target proteins and is involved in various processes such as autophagy and endoplasmic reticulum-associated degradation (ERAD). The polypeptide is Ubiquitin carboxyl-terminal hydrolase 13 (usp13) (Danio rerio (Zebrafish)).